Here is a 379-residue protein sequence, read N- to C-terminus: Putative thylakoid lumen peptidyl-prolyl cis-trans isomerase sll0408 (379 aa).

The first 33 residues, Met-1–Ala-33, serve as a signal peptide directing secretion. Positions Gly-190 to Asn-378 constitute a PPIase cyclophilin-type domain.

It localises to the cellular thylakoid lumen. The catalysed reaction is [protein]-peptidylproline (omega=180) = [protein]-peptidylproline (omega=0). In terms of biological role, PPIases accelerate the folding of proteins. It catalyzes the cis-trans isomerization of proline imidic peptide bonds in oligopeptides. Required for the assembly and stabilization of PSII. This chain is Putative thylakoid lumen peptidyl-prolyl cis-trans isomerase sll0408, found in Synechocystis sp. (strain ATCC 27184 / PCC 6803 / Kazusa).